The sequence spans 327 residues: Phenylalanine--tRNA ligase alpha subunit (327 aa).

Glutamate 252 is a binding site for Mg(2+).

This sequence belongs to the class-II aminoacyl-tRNA synthetase family. Phe-tRNA synthetase alpha subunit type 1 subfamily. Tetramer of two alpha and two beta subunits. It depends on Mg(2+) as a cofactor.

It is found in the cytoplasm. The enzyme catalyses tRNA(Phe) + L-phenylalanine + ATP = L-phenylalanyl-tRNA(Phe) + AMP + diphosphate + H(+). The sequence is that of Phenylalanine--tRNA ligase alpha subunit from Pectobacterium atrosepticum (strain SCRI 1043 / ATCC BAA-672) (Erwinia carotovora subsp. atroseptica).